Consider the following 195-residue polypeptide: Pyridoxal 5'-phosphate synthase subunit PdxT (195 aa).

46 to 48 (GES) lines the L-glutamine pocket. Cysteine 78 (nucleophile) is an active-site residue. Residues arginine 107 and 136 to 137 (IR) each bind L-glutamine. Catalysis depends on charge relay system residues histidine 173 and glutamate 175.

It belongs to the glutaminase PdxT/SNO family. In the presence of PdxS, forms a dodecamer of heterodimers. Only shows activity in the heterodimer.

The enzyme catalyses aldehydo-D-ribose 5-phosphate + D-glyceraldehyde 3-phosphate + L-glutamine = pyridoxal 5'-phosphate + L-glutamate + phosphate + 3 H2O + H(+). It carries out the reaction L-glutamine + H2O = L-glutamate + NH4(+). It participates in cofactor biosynthesis; pyridoxal 5'-phosphate biosynthesis. Catalyzes the hydrolysis of glutamine to glutamate and ammonia as part of the biosynthesis of pyridoxal 5'-phosphate. The resulting ammonia molecule is channeled to the active site of PdxS. The polypeptide is Pyridoxal 5'-phosphate synthase subunit PdxT (Dehalococcoides mccartyi (strain CBDB1)).